We begin with the raw amino-acid sequence, 461 residues long: Ribosomal protein uS12 methylthiotransferase RimO (461 aa).

In terms of domain architecture, MTTase N-terminal spans Pro13–Pro128. Residues Cys22, Cys58, Cys87, Cys159, Cys163, and Cys166 each coordinate [4Fe-4S] cluster. The Radical SAM core domain maps to Leu145–Lys390. The region spanning Ala393–Val461 is the TRAM domain.

The protein belongs to the methylthiotransferase family. RimO subfamily. Requires [4Fe-4S] cluster as cofactor.

It localises to the cytoplasm. It catalyses the reaction L-aspartate(89)-[ribosomal protein uS12]-hydrogen + (sulfur carrier)-SH + AH2 + 2 S-adenosyl-L-methionine = 3-methylsulfanyl-L-aspartate(89)-[ribosomal protein uS12]-hydrogen + (sulfur carrier)-H + 5'-deoxyadenosine + L-methionine + A + S-adenosyl-L-homocysteine + 2 H(+). Catalyzes the methylthiolation of an aspartic acid residue of ribosomal protein uS12. In Paraburkholderia phytofirmans (strain DSM 17436 / LMG 22146 / PsJN) (Burkholderia phytofirmans), this protein is Ribosomal protein uS12 methylthiotransferase RimO.